A 321-amino-acid chain; its full sequence is Transcriptional activator protein Pur-alpha (321 aa).

The segment at 1–54 is disordered; it reads MADRDSGSEQGGAALGSGGSLGHPGSGSGSGGGGGGGGGGGGSGGGGGAPGGLQ. Alanine 2 carries the post-translational modification N-acetylalanine. Residues 9 to 51 are compositionally biased toward gly residues; sequence EQGGAALGSGGSLGHPGSGSGSGGGGGGGGGGGGSGGGGGAPG. Phosphoserine is present on serine 181. Low complexity predominate over residues 294–313; the sequence is LHQQQQQQQEETTAATLLLQ. Residues 294–321 are disordered; sequence LHQQQQQQQEETTAATLLLQGEEEGEED.

Belongs to the PUR DNA-binding protein family. In terms of assembly, homodimer, heterodimer with PURB and heterotrimer with PURB and YBX1/Y-box protein 1. Interacts with FMR1; this interaction occurs in association with polyribosome.

Its subcellular location is the nucleus. Functionally, this is a probable transcription activator that specifically binds the purine-rich single strand of the PUR element located upstream of the c-Myc gene. May play a role in the initiation of DNA replication and in recombination. This is Transcriptional activator protein Pur-alpha (Pura) from Mus musculus (Mouse).